Reading from the N-terminus, the 271-residue chain is Dermonecrotic toxin SpeSicTox-betaIF1 (271 aa).

Residue H3 is part of the active site. Mg(2+) is bound by residues E23 and D25. H39 serves as the catalytic Nucleophile. 2 disulfides stabilise this stretch: C43/C49 and C45/C188. D83 contacts Mg(2+).

The protein belongs to the arthropod phospholipase D family. Class II subfamily. It depends on Mg(2+) as a cofactor. Expressed by the venom gland.

It localises to the secreted. It carries out the reaction an N-(acyl)-sphingosylphosphocholine = an N-(acyl)-sphingosyl-1,3-cyclic phosphate + choline. The enzyme catalyses an N-(acyl)-sphingosylphosphoethanolamine = an N-(acyl)-sphingosyl-1,3-cyclic phosphate + ethanolamine. It catalyses the reaction a 1-acyl-sn-glycero-3-phosphocholine = a 1-acyl-sn-glycero-2,3-cyclic phosphate + choline. The catalysed reaction is a 1-acyl-sn-glycero-3-phosphoethanolamine = a 1-acyl-sn-glycero-2,3-cyclic phosphate + ethanolamine. Its function is as follows. Dermonecrotic toxins cleave the phosphodiester linkage between the phosphate and headgroup of certain phospholipids (sphingolipid and lysolipid substrates), forming an alcohol (often choline) and a cyclic phosphate. This toxin acts on sphingomyelin (SM). It may also act on ceramide phosphoethanolamine (CPE), lysophosphatidylcholine (LPC) and lysophosphatidylethanolamine (LPE), but not on lysophosphatidylserine (LPS), and lysophosphatidylglycerol (LPG). It acts by transphosphatidylation, releasing exclusively cyclic phosphate products as second products. Induces dermonecrosis, hemolysis, increased vascular permeability, edema, inflammatory response, and platelet aggregation. The protein is Dermonecrotic toxin SpeSicTox-betaIF1 of Sicarius peruensis (Six-eyed sand spider).